We begin with the raw amino-acid sequence, 313 residues long: Ribosomal RNA small subunit methyltransferase H (313 aa).

S-adenosyl-L-methionine contacts are provided by residues 35-37, D55, F79, D100, and Q107; that span reads GGH.

The protein belongs to the methyltransferase superfamily. RsmH family.

It is found in the cytoplasm. It carries out the reaction cytidine(1402) in 16S rRNA + S-adenosyl-L-methionine = N(4)-methylcytidine(1402) in 16S rRNA + S-adenosyl-L-homocysteine + H(+). Functionally, specifically methylates the N4 position of cytidine in position 1402 (C1402) of 16S rRNA. The chain is Ribosomal RNA small subunit methyltransferase H from Burkholderia pseudomallei (strain 1106a).